The chain runs to 316 residues: Probable metal transport system membrane protein TC_0342 (316 aa).

The next 10 helical transmembrane spans lie at 1-21 (MFASISPYYGVSFFEFFIVFF), 39-59 (IQVIVFFAIAVSCSIIGTFLV), 64-84 (AMYANVVSHTILFGLVCACLF), 94-114 (QNLTIAAISTTLLTGASIHFI), 124-144 (ASTALVFSLLFSASLLLLVFL), 171-191 (FLVLLXNLGVSYCFFSSFICV), 196-216 (VFAFSLGIRVKLIDYLMMFLL), 226-246 (AVGVLMSLAFLLVPGLIAKLI), 252-272 (EMMGYSMIFGVLSALIAPALS), and 286-306 (SGLAVCLLLVFYIGTLATVFV).

This sequence belongs to the ABC-3 integral membrane protein family.

The protein localises to the cell inner membrane. In terms of biological role, part of an ATP-driven transport system TC_0338/TC_0339/TC_0341/TC_0342 for a metal. The protein is Probable metal transport system membrane protein TC_0342 of Chlamydia muridarum (strain MoPn / Nigg).